The chain runs to 330 residues: Taste receptor type 2 member 117 (330 aa).

Over 1–16 the chain is Extracellular; the sequence is MKHFWKILSVISQSTL. A helical membrane pass occupies residues 17–37; it reads SVILIVELVIGIIGNGFMVLV. The Cytoplasmic portion of the chain corresponds to 38–53; sequence HCMDWVKKKKMSLVNQ. A helical transmembrane segment spans residues 54–74; sequence ILTALSISRIFQLCLLFISLV. The Extracellular portion of the chain corresponds to 75–95; sequence INFSYTDLTTSSRMIQVMYNA. The N-linked (GlcNAc...) asparagine glycan is linked to asparagine 76. A helical membrane pass occupies residues 96-116; it reads WILANHFSIWIATCLTVLYFL. The Cytoplasmic portion of the chain corresponds to 117–135; sequence KIANFSNSFFLYLKWRVEK. A helical transmembrane segment spans residues 136-156; it reads VVSVTLLVSLLLLILNILLTN. The Extracellular portion of the chain corresponds to 157-190; the sequence is LETDMWTNEYQRNISCSFSSHYYAKCHRQVLRLH. The N-linked (GlcNAc...) asparagine glycan is linked to asparagine 169. A helical membrane pass occupies residues 191–211; that stretch reads IIFLSVPVVLSLSTFLLLIFS. Over 212-239 the chain is Cytoplasmic; sequence LWTHHKRMQQHVQGGRDARTTAHFKALQ. Residues 240–260 form a helical membrane-spanning segment; the sequence is TVIAFFLLYSIFILSVLIQIW. Residues 261–269 lie on the Extracellular side of the membrane; the sequence is KYELLKKNL. The helical transmembrane segment at 270–290 threads the bilayer; it reads FVVFCEVVYIAFPTFHSYILI. At 291–330 the chain is on the cytoplasmic side; that stretch reads VGDMKLRQACLPLCIIAAEIQTTLCRNFRSLKYFRLCCIF.

Belongs to the G-protein coupled receptor T2R family.

It is found in the membrane. Putative taste receptor which may play a role in the perception of bitterness. The protein is Taste receptor type 2 member 117 of Mus musculus (Mouse).